The following is a 501-amino-acid chain: Cobyric acid synthase (501 aa).

Residues 251–446 enclose the GATase cobBQ-type domain; the sequence is NIDIAIIRLS…LHGIFDSEEF (196 aa). The active-site Nucleophile is C332. H438 is a catalytic residue.

Belongs to the CobB/CobQ family. CobQ subfamily.

It participates in cofactor biosynthesis; adenosylcobalamin biosynthesis. In terms of biological role, catalyzes amidations at positions B, D, E, and G on adenosylcobyrinic A,C-diamide. NH(2) groups are provided by glutamine, and one molecule of ATP is hydrogenolyzed for each amidation. The chain is Cobyric acid synthase from Clostridium botulinum (strain Alaska E43 / Type E3).